A 234-amino-acid chain; its full sequence is MPTPHIEAQDGEFAETVLMPGDPLRAKFIADNFLDDAKCITQVRNMLGYTGTYKGKRVSVMGSGMGVPSISIYATELYKDYGVEKIIRIGSCGAVRDDIKIRDIVIGMAASTDSNVNRQRFHNVDFAACADFSLLKSVVDTAEKLGKPVHVGNIFTADLFYTPQPEKFATMEKYGILAVEMEAAGLYGVAAEYGKKALTVLTVSDHIKTGEKTTSEERETTFKDMMELTLESVL.

His-5 lines the a purine D-ribonucleoside pocket. Phosphate is bound by residues Gly-21, Arg-25, Arg-44, and 88 to 91; that span reads RIGS. A purine D-ribonucleoside contacts are provided by residues 180–182 and 204–205; these read EME and SD. Asp-205 (proton donor) is an active-site residue.

This sequence belongs to the PNP/UDP phosphorylase family. In terms of assembly, homohexamer; trimer of homodimers.

It carries out the reaction a purine D-ribonucleoside + phosphate = a purine nucleobase + alpha-D-ribose 1-phosphate. It catalyses the reaction a purine 2'-deoxy-D-ribonucleoside + phosphate = a purine nucleobase + 2-deoxy-alpha-D-ribose 1-phosphate. Its function is as follows. Catalyzes the reversible phosphorolytic breakdown of the N-glycosidic bond in the beta-(deoxy)ribonucleoside molecules, with the formation of the corresponding free purine bases and pentose-1-phosphate. This Colwellia psychrerythraea (strain 34H / ATCC BAA-681) (Vibrio psychroerythus) protein is Purine nucleoside phosphorylase DeoD-type.